Reading from the N-terminus, the 209-residue chain is Large ribosomal subunit protein uL3 (209 aa).

The disordered stretch occupies residues 141-163 (RAVGSMGASSDPSRTFKNKRMPG).

Belongs to the universal ribosomal protein uL3 family. Part of the 50S ribosomal subunit. Forms a cluster with proteins L14 and L19.

Its function is as follows. One of the primary rRNA binding proteins, it binds directly near the 3'-end of the 23S rRNA, where it nucleates assembly of the 50S subunit. The chain is Large ribosomal subunit protein uL3 from Clostridium botulinum (strain Kyoto / Type A2).